The chain runs to 207 residues: Ribonuclease HII (207 aa).

The RNase H type-2 domain occupies 20–207; sequence QLFAGVDEVG…KPVKRVLGIE (188 aa). A divalent metal cation is bound by residues Asp26, Glu27, and Asp118.

Belongs to the RNase HII family. The cofactor is Mn(2+). Mg(2+) is required as a cofactor.

Its subcellular location is the cytoplasm. It carries out the reaction Endonucleolytic cleavage to 5'-phosphomonoester.. Its function is as follows. Endonuclease that specifically degrades the RNA of RNA-DNA hybrids. The chain is Ribonuclease HII from Aliivibrio salmonicida (strain LFI1238) (Vibrio salmonicida (strain LFI1238)).